A 232-amino-acid chain; its full sequence is uncharacterized protein (232 aa).

The N-terminal stretch at 1 to 32 (MTTSKIATAFKTATFALAAGAVALGLASPADA) is a signal peptide.

This is an uncharacterized protein from Mycobacterium bovis (strain ATCC BAA-935 / AF2122/97).